A 290-amino-acid chain; its full sequence is ATP synthase gamma chain (290 aa).

Belongs to the ATPase gamma chain family. F-type ATPases have 2 components, CF(1) - the catalytic core - and CF(0) - the membrane proton channel. CF(1) has five subunits: alpha(3), beta(3), gamma(1), delta(1), epsilon(1). CF(0) has three main subunits: a, b and c.

It localises to the cell membrane. Its function is as follows. Produces ATP from ADP in the presence of a proton gradient across the membrane. The gamma chain is believed to be important in regulating ATPase activity and the flow of protons through the CF(0) complex. This Roseiflexus sp. (strain RS-1) protein is ATP synthase gamma chain.